A 691-amino-acid chain; its full sequence is Alpha-1,4-glucan:maltose-1-phosphate maltosyltransferase (691 aa).

Alpha-maltose 1-phosphate-binding residues include K280, Q341, and D376. Catalysis depends on D411, which acts as the Nucleophile. N412 contacts alpha-maltose 1-phosphate. Catalysis depends on E440, which acts as the Proton donor. 550–551 (KY) provides a ligand contact to alpha-maltose 1-phosphate.

Belongs to the glycosyl hydrolase 13 family. GlgE subfamily. Homodimer.

It catalyses the reaction alpha-maltose 1-phosphate + [(1-&gt;4)-alpha-D-glucosyl](n) = [(1-&gt;4)-alpha-D-glucosyl](n+2) + phosphate. In terms of biological role, maltosyltransferase that uses maltose 1-phosphate (M1P) as the sugar donor to elongate linear or branched alpha-(1-&gt;4)-glucans. Is involved in a branched alpha-glucan biosynthetic pathway from trehalose, together with TreS, Mak and GlgB. This Arcanobacterium haemolyticum (strain ATCC 9345 / DSM 20595 / CCM 5947 / CCUG 17215 / LMG 16163 / NBRC 15585 / NCTC 8452 / 11018) protein is Alpha-1,4-glucan:maltose-1-phosphate maltosyltransferase.